Consider the following 417-residue polypeptide: Serine hydroxymethyltransferase (417 aa).

(6S)-5,6,7,8-tetrahydrofolate is bound by residues leucine 121 and glycine 125–leucine 127. Position 229 is an N6-(pyridoxal phosphate)lysine (lysine 229). Serine 355 to phenylalanine 357 is a (6S)-5,6,7,8-tetrahydrofolate binding site.

This sequence belongs to the SHMT family. As to quaternary structure, homodimer. Pyridoxal 5'-phosphate serves as cofactor.

Its subcellular location is the cytoplasm. The enzyme catalyses (6R)-5,10-methylene-5,6,7,8-tetrahydrofolate + glycine + H2O = (6S)-5,6,7,8-tetrahydrofolate + L-serine. Its pathway is one-carbon metabolism; tetrahydrofolate interconversion. The protein operates within amino-acid biosynthesis; glycine biosynthesis; glycine from L-serine: step 1/1. Its function is as follows. Catalyzes the reversible interconversion of serine and glycine with tetrahydrofolate (THF) serving as the one-carbon carrier. This reaction serves as the major source of one-carbon groups required for the biosynthesis of purines, thymidylate, methionine, and other important biomolecules. Also exhibits THF-independent aldolase activity toward beta-hydroxyamino acids, producing glycine and aldehydes, via a retro-aldol mechanism. The polypeptide is Serine hydroxymethyltransferase (Shewanella sp. (strain W3-18-1)).